The sequence spans 367 residues: Flagellar P-ring protein (367 aa).

An N-terminal signal peptide occupies residues Met-1 to Ala-21.

Belongs to the FlgI family. In terms of assembly, the basal body constitutes a major portion of the flagellar organelle and consists of four rings (L,P,S, and M) mounted on a central rod.

The protein resides in the periplasm. Its subcellular location is the bacterial flagellum basal body. Functionally, assembles around the rod to form the L-ring and probably protects the motor/basal body from shearing forces during rotation. The chain is Flagellar P-ring protein from Salmonella paratyphi C (strain RKS4594).